The chain runs to 102 residues: Phosphoribosyl-ATP pyrophosphatase (102 aa).

This sequence belongs to the PRA-PH family.

The protein localises to the cytoplasm. The enzyme catalyses 1-(5-phospho-beta-D-ribosyl)-ATP + H2O = 1-(5-phospho-beta-D-ribosyl)-5'-AMP + diphosphate + H(+). The protein operates within amino-acid biosynthesis; L-histidine biosynthesis; L-histidine from 5-phospho-alpha-D-ribose 1-diphosphate: step 2/9. This is Phosphoribosyl-ATP pyrophosphatase from Dinoroseobacter shibae (strain DSM 16493 / NCIMB 14021 / DFL 12).